The chain runs to 370 residues: MSFVVANTEFVSGAAGNLARLGSMISAANSAAAAQTTAVAAAGADEVSAAVAALFGAHGQTYQVLSAQAAAFHSQFVQALSGGAQAYAAAEATNFGPLQPLFDVINAPTLALLNRPLIGNGADGTAANPNGQAGGLLIGNGGNGFSPAAGPGGNGGAAGLLGHGGNGGVGALGANGGAGGTGGWLFGNGGAGGNSGGGGGAGGIGGSAVLFGAGGAGGISPNGMGAGGSGGNGGLFFGNGGAGASSFLGGGGAGGRAFLFGDGGAGGAALSAGSAGRGGDAGFFYGNGGAGGSGAGGASSAHGGAGGQAGLFGNGGEGGDGGALGGNGGNGGNAQLIGNGGDGGDGGGAGAPGLGGRGGLLLGLPGANGT.

The UBA stretch occupies residues 1-72; that stretch reads MSFVVANTEF…QVLSAQAAAF (72 aa). Residues 1–93 form the PE domain; the sequence is MSFVVANTEF…AQAYAAAEAT (93 aa).

The protein belongs to the mycobacterial PE family. PGRS subfamily. In terms of assembly, interacts directly with host polyubiquitin in a UBA-dependent manner.

The protein resides in the secreted. It is found in the cell wall. The protein localises to the cell surface. Functionally, mediates direct binding of host ubiquitin (Ub) to the mycobacterial surface, which triggers host xenophagy. Interaction between Rv1468c and ubiquitin recruits autophagy receptor p62 to deliver mycobacteria into LC3-associated autophagosomes. It could be a viable evolutionary strategy adopted by M.tuberculosis to maintain long-term intracellular survival through self-controlling its intracellular bacterial loads to avoid excessive host inflammatory immune responses. The protein is Ubiquitin-binding protein Rv1468c of Mycobacterium tuberculosis (strain ATCC 25618 / H37Rv).